The primary structure comprises 181 residues: Adenylate kinase (181 aa).

Position 10 to 15 (10 to 15 (GAGKGT)) interacts with ATP. The NMP stretch occupies residues 30-59 (STGDLFRANIGEGTPLGKEAKSYIDAGKLV). AMP contacts are provided by residues Thr-31, Arg-36, 57–59 (KLV), 85–88 (GFPR), and Gln-92. Residues 126-132 (ARGRADD) are LID. Arg-127 is a binding site for ATP. Arg-129 and Arg-140 together coordinate AMP. Gly-166 contacts ATP.

The protein belongs to the adenylate kinase family. As to quaternary structure, monomer.

It localises to the cytoplasm. The enzyme catalyses AMP + ATP = 2 ADP. It participates in purine metabolism; AMP biosynthesis via salvage pathway; AMP from ADP: step 1/1. Its function is as follows. Catalyzes the reversible transfer of the terminal phosphate group between ATP and AMP. Plays an important role in cellular energy homeostasis and in adenine nucleotide metabolism. The sequence is that of Adenylate kinase from Corynebacterium diphtheriae (strain ATCC 700971 / NCTC 13129 / Biotype gravis).